The chain runs to 512 residues: PTS system mannitol-specific EIICB component (512 aa).

Residues 1-28 are Cytoplasmic-facing; that stretch reads MSQTEEKKGIGRRVQAFGSFLSSMIMPN. The PTS EIIC type-2 domain maps to 17–349; sequence FGSFLSSMIM…MKFTKEPKQD (333 aa). The chain crosses the membrane as a helical span at residues 29-50; sequence IGAFIAWGFIAAIFIDNGWFPN. The Extracellular segment spans residues 51–54; that stretch reads KDLA. A helical transmembrane segment spans residues 55-75; the sequence is TLAGPMITYLIPLLIAFSGGR. The Cytoplasmic segment spans residues 76–139; that stretch reads LIYDLRGGII…QGFEMLFNNF (64 aa). Residues 140 to 161 traverse the membrane as a helical segment; that stretch reads SAGILGFIMTIAGFKILAPLMK. The Extracellular segment spans residues 162–170; that stretch reads FIMHILSVA. The helical transmembrane segment at 171–191 threads the bilayer; that stretch reads VEALVHAHLLPLVSILVEPAK. The Cytoplasmic portion of the chain corresponds to 192–278; sequence IVFLNNAINH…VLMRPLLFIA (87 aa). Residues 279 to 298 form a helical membrane-spanning segment; that stretch reads VILGGMTGVATYQATGFGFK. Residues 299 to 318 lie on the Extracellular side of the membrane; it reads SPASPGSFIVYCLNAPRGEF. Residues 319-340 traverse the membrane as a helical segment; it reads LHMLLGVFLATLVSFVVAALIM. The Cytoplasmic segment spans residues 341–512; the sequence is KFTKEPKQDL…LNNLKKDDQA (172 aa). Residues 365–376 show a composition bias toward low complexity; the sequence is SSVASKLVSSDK. The segment at 365–401 is disordered; that stretch reads SSVASKLVSSDKNVNTEENASGNVSETSSLDDDPEAL. The segment covering 380–392 has biased composition (polar residues); sequence TEENASGNVSETS. Positions 419 to 512 constitute a PTS EIIB type-2 domain; sequence NHVIFACDAG…LNNLKKDDQA (94 aa). The Phosphocysteine intermediate; for EIIB activity role is filled by Cys-425. Position 425 is a phosphocysteine; by EIIA (Cys-425).

In terms of assembly, homodimer.

The protein localises to the cell membrane. It carries out the reaction D-mannitol(out) + N(pros)-phospho-L-histidyl-[protein] = D-mannitol 1-phosphate(in) + L-histidyl-[protein]. The phosphoenolpyruvate-dependent sugar phosphotransferase system (sugar PTS), a major carbohydrate active transport system, catalyzes the phosphorylation of incoming sugar substrates concomitantly with their translocation across the cell membrane. The enzyme II CmtAB PTS system is involved in D-mannitol transport. The sequence is that of PTS system mannitol-specific EIICB component (mtlA) from Staphylococcus aureus (strain MRSA252).